The primary structure comprises 139 residues: Large ribosomal subunit protein uL22c (139 aa).

This sequence belongs to the universal ribosomal protein uL22 family. As to quaternary structure, part of the 50S ribosomal subunit.

It localises to the plastid. Its subcellular location is the chloroplast. Its function is as follows. This protein binds specifically to 23S rRNA. In terms of biological role, the globular domain of the protein is located near the polypeptide exit tunnel on the outside of the subunit, while an extended beta-hairpin is found that lines the wall of the exit tunnel in the center of the 70S ribosome. The sequence is that of Large ribosomal subunit protein uL22c (rpl22) from Cycas taitungensis (Prince sago).